The primary structure comprises 539 residues: Squalene monooxygenase SE1 (539 aa).

The next 2 helical transmembrane spans lie at 22-42 (LLID…FLLL) and 71-91 (IAGS…ALAY). Residues 84–85 (VA), 104–105 (ER), arginine 112, arginine 183, valine 199, aspartate 361, and methionine 374 contribute to the FAD site. The chain crosses the membrane as a helical span at residues 472 to 492 (LFLHFFAVAIYGVGRLLIPFP).

It belongs to the squalene monooxygenase family. Requires FAD as cofactor. In terms of tissue distribution, mostly expressed in flower buds and leaves, and, to a lower extent, at high levels thought, in roots and petioles. In petioles, preferentially observed in vascular bundle tissue (phloem cells and parenchymatous cells near xylem) and resin ducts.

It localises to the microsome membrane. It is found in the endoplasmic reticulum membrane. The catalysed reaction is squalene + reduced [NADPH--hemoprotein reductase] + O2 = (S)-2,3-epoxysqualene + oxidized [NADPH--hemoprotein reductase] + H2O + H(+). The protein operates within terpene metabolism; lanosterol biosynthesis; lanosterol from farnesyl diphosphate: step 2/3. Its function is as follows. Component of the triterpene saponins (e.g. ginsenosides or panaxosides) and phytosterols biosynthetic pathways. Catalyzes the first oxygenation step in sterol biosynthesis and is suggested to be one of the rate-limiting enzymes in this pathway. In Panax ginseng (Korean ginseng), this protein is Squalene monooxygenase SE1.